A 637-amino-acid polypeptide reads, in one-letter code: ATP-dependent rRNA helicase SPB4 (637 aa).

A Q motif motif is present at residues 14–42 (WDTLNPPLSEWIRDAVATMGFDQMTPVQA). The Helicase ATP-binding domain occupies 45–247 (LPHFMGNKDV…RVGLRNPVKI (203 aa)). 58–65 (AVTGSGKT) contacts ATP. Residues 195 to 198 (DEAD) carry the DEAD box motif. The Helicase C-terminal domain maps to 283–438 (ALAELLRQLP…TITTSEDDAA (156 aa)). A coiled-coil region spans residues 524-631 (KEKTREQQRK…AAAKQEKDGE (108 aa)). 4 stretches are compositionally biased toward basic and acidic residues: residues 535–553 (ALEE…EEFK), 563–576 (SAKH…VERR), 583–618 (RDAE…EKAA), and 625–637 (KQEK…GFDD). The interval 535–637 (ALEEEKSGVK…KDGEFKGFDD (103 aa)) is disordered.

Belongs to the DEAD box helicase family. DDX55/SPB4 subfamily. In terms of assembly, component of pre-60S ribosomal complexes.

Its subcellular location is the nucleus. It is found in the nucleolus. The enzyme catalyses ATP + H2O = ADP + phosphate + H(+). ATP-binding RNA helicase involved in the biogenesis of 60S ribosomal subunits. Binds 90S pre-ribosomal particles and dissociates from pre-60S ribosomal particles after processing of 27SB pre-rRNA. Required for the normal formation of 18S rRNA through the processing of pre-rRNAs at sites A0, A1 and A2, and the normal formation of 25S and 5.8S rRNAs through the processing of pre-rRNAs at sites C1 and C2. The polypeptide is ATP-dependent rRNA helicase SPB4 (Gibberella zeae (strain ATCC MYA-4620 / CBS 123657 / FGSC 9075 / NRRL 31084 / PH-1) (Wheat head blight fungus)).